Here is a 595-residue protein sequence, read N- to C-terminus: MATELLCLHRPISLTHKLFRNPLPKVIQATPLTLKLRCSVSTENVSFTETETEARRSANYEPNSWDYDFLLSSDTDESIEVYKDKAKKLEAEVRREINNEKAEFLTLLELIDNVQRLGLGYRFESDIRRALDRFVSSGGFDGVTKTSLHATALSFRLLRQHGFEVSQEAFSGFKDQNGNFLENLKEDTKAILSLYEASFLALEGENILDEARVFAISHLKELSEEKIGKELAEQVNHALELPLHRRTQRLEAVWSIEAYRKKEDANQVLLELAILDYNMIQSVYQRDLRETSRWWRRVGLATKLHFAKDRLIESFYWAVGVAFEPQYSDCRNSVAKMFSFVTIIDDIYDVYGTLDELELFTDAVERWDVNAINDLPDYMKLCFLALYNTINEIAYDNLKDKGENILPYLTKAWADLCNAFLQEAKWLYNKSTPTFDDYFGNAWKSSSGPLQLIFAYFAVVQNIKKEEIENLQKYHDIISRPSHIFRLCNDLASASAEIARGETANSVSCYMRTKGISEELATESVMNLIDETCKKMNKEKLGGSLFAKPFVETAINLARQSHCTYHNGDAHTSPDELTRKRVLSVITEPILPFER.

The N-terminal 37 residues, 1–37, are a transit peptide targeting the chloroplast; it reads MATELLCLHRPISLTHKLFRNPLPKVIQATPLTLKLR. Dimethylallyl diphosphate is bound at residue aspartate 345. Residues aspartate 345 and aspartate 349 each contribute to the Mg(2+) site. The short motif at 345-349 is the DDXXD motif element; that stretch reads DDIYD. Dimethylallyl diphosphate contacts are provided by glutamate 423, arginine 486, and asparagine 489. Asparagine 489, serine 493, and glutamate 497 together coordinate Mg(2+).

The protein belongs to the terpene synthase family. Tpsb subfamily. In terms of assembly, homodimer. Mg(2+) serves as cofactor. The cofactor is Mn(2+).

Its subcellular location is the plastid. It localises to the chloroplast. The catalysed reaction is dimethylallyl diphosphate = isoprene + diphosphate. It participates in secondary metabolite biosynthesis; terpenoid biosynthesis. Competitive inhibition is mediated by geranyl diphosphate (GPP). Lyase that catalyzes the formation of isoprene from dimethylallyl diphosphate via a syn-periplanar elimination mechanism in which the diphosphate-leaving group serves as a general base. This Populus canescens (Grey poplar) protein is Isoprene synthase, chloroplastic.